The sequence spans 647 residues: tRNA 5-methylaminomethyl-2-thiouridine biosynthesis bifunctional protein MnmC (647 aa).

The tRNA (mnm(5)s(2)U34)-methyltransferase stretch occupies residues 1–227 (MLTWKNNLTP…KREMLIGSYS (227 aa)). Residues 256–647 (VGAGIAGTTL…ARFLYRKVRK (392 aa)) form an FAD-dependent cmnm(5)s(2)U34 oxidoreductase region.

This sequence in the N-terminal section; belongs to the methyltransferase superfamily. tRNA (mnm(5)s(2)U34)-methyltransferase family. The protein in the C-terminal section; belongs to the DAO family. FAD is required as a cofactor.

Its subcellular location is the cytoplasm. It carries out the reaction 5-aminomethyl-2-thiouridine(34) in tRNA + S-adenosyl-L-methionine = 5-methylaminomethyl-2-thiouridine(34) in tRNA + S-adenosyl-L-homocysteine + H(+). In terms of biological role, catalyzes the last two steps in the biosynthesis of 5-methylaminomethyl-2-thiouridine (mnm(5)s(2)U) at the wobble position (U34) in tRNA. Catalyzes the FAD-dependent demodification of cmnm(5)s(2)U34 to nm(5)s(2)U34, followed by the transfer of a methyl group from S-adenosyl-L-methionine to nm(5)s(2)U34, to form mnm(5)s(2)U34. In Leptospira interrogans serogroup Icterohaemorrhagiae serovar Lai (strain 56601), this protein is tRNA 5-methylaminomethyl-2-thiouridine biosynthesis bifunctional protein MnmC.